Consider the following 354-residue polypeptide: Holliday junction branch migration complex subunit RuvB (354 aa).

Residues 1-38 (MSDFERTEFELPPGVGHSQNEDLNPQQTAGDSDIDTSL) form a disordered region. The interval 2–199 (SDFERTEFEL…FGFTAQMEFY (198 aa)) is large ATPase domain (RuvB-L). Residues 17 to 30 (HSQNEDLNPQQTAG) are compositionally biased toward polar residues. ATP contacts are provided by residues leucine 38, arginine 39, glycine 80, lysine 83, threonine 84, threonine 85, 146–148 (EDF), arginine 189, tyrosine 199, and arginine 236. Threonine 84 is a binding site for Mg(2+). Positions 200–270 (DTADLTRVVT…VARAALLVFD (71 aa)) are small ATPAse domain (RuvB-S). A head domain (RuvB-H) region spans residues 273 to 354 (ESGLDRLDRA…LEPPEGTIGL (82 aa)). DNA-binding residues include arginine 328 and arginine 333.

It belongs to the RuvB family. As to quaternary structure, homohexamer. Forms an RuvA(8)-RuvB(12)-Holliday junction (HJ) complex. HJ DNA is sandwiched between 2 RuvA tetramers; dsDNA enters through RuvA and exits via RuvB. An RuvB hexamer assembles on each DNA strand where it exits the tetramer. Each RuvB hexamer is contacted by two RuvA subunits (via domain III) on 2 adjacent RuvB subunits; this complex drives branch migration. In the full resolvosome a probable DNA-RuvA(4)-RuvB(12)-RuvC(2) complex forms which resolves the HJ.

The protein localises to the cytoplasm. The enzyme catalyses ATP + H2O = ADP + phosphate + H(+). Functionally, the RuvA-RuvB-RuvC complex processes Holliday junction (HJ) DNA during genetic recombination and DNA repair, while the RuvA-RuvB complex plays an important role in the rescue of blocked DNA replication forks via replication fork reversal (RFR). RuvA specifically binds to HJ cruciform DNA, conferring on it an open structure. The RuvB hexamer acts as an ATP-dependent pump, pulling dsDNA into and through the RuvAB complex. RuvB forms 2 homohexamers on either side of HJ DNA bound by 1 or 2 RuvA tetramers; 4 subunits per hexamer contact DNA at a time. Coordinated motions by a converter formed by DNA-disengaged RuvB subunits stimulates ATP hydrolysis and nucleotide exchange. Immobilization of the converter enables RuvB to convert the ATP-contained energy into a lever motion, pulling 2 nucleotides of DNA out of the RuvA tetramer per ATP hydrolyzed, thus driving DNA branch migration. The RuvB motors rotate together with the DNA substrate, which together with the progressing nucleotide cycle form the mechanistic basis for DNA recombination by continuous HJ branch migration. Branch migration allows RuvC to scan DNA until it finds its consensus sequence, where it cleaves and resolves cruciform DNA. The protein is Holliday junction branch migration complex subunit RuvB of Corynebacterium jeikeium (strain K411).